A 160-amino-acid polypeptide reads, in one-letter code: Cytochrome b6-f complex subunit 4 (160 aa).

3 helical membrane passes run Leu-36 to Val-56, Leu-95 to Glu-115, and Thr-131 to Ile-151.

Belongs to the cytochrome b family. PetD subfamily. As to quaternary structure, the 4 large subunits of the cytochrome b6-f complex are cytochrome b6, subunit IV (17 kDa polypeptide, petD), cytochrome f and the Rieske protein, while the 4 small subunits are petG, petL, petM and petN. The complex functions as a dimer.

It localises to the plastid. It is found in the chloroplast thylakoid membrane. Its function is as follows. Component of the cytochrome b6-f complex, which mediates electron transfer between photosystem II (PSII) and photosystem I (PSI), cyclic electron flow around PSI, and state transitions. This chain is Cytochrome b6-f complex subunit 4, found in Morus indica (Mulberry).